A 635-amino-acid polypeptide reads, in one-letter code: 1-deoxy-D-xylulose-5-phosphate synthase (635 aa).

Residues His-74 and 115–117 (GHA) contribute to the thiamine diphosphate site. Asp-146 provides a ligand contact to Mg(2+). Thiamine diphosphate is bound by residues 147–148 (GA), Asn-175, Tyr-285, and Glu-367. Asn-175 lines the Mg(2+) pocket.

It belongs to the transketolase family. DXPS subfamily. In terms of assembly, homodimer. It depends on Mg(2+) as a cofactor. Requires thiamine diphosphate as cofactor.

It carries out the reaction D-glyceraldehyde 3-phosphate + pyruvate + H(+) = 1-deoxy-D-xylulose 5-phosphate + CO2. It participates in metabolic intermediate biosynthesis; 1-deoxy-D-xylulose 5-phosphate biosynthesis; 1-deoxy-D-xylulose 5-phosphate from D-glyceraldehyde 3-phosphate and pyruvate: step 1/1. Functionally, catalyzes the acyloin condensation reaction between C atoms 2 and 3 of pyruvate and glyceraldehyde 3-phosphate to yield 1-deoxy-D-xylulose-5-phosphate (DXP). This Anaeromyxobacter sp. (strain Fw109-5) protein is 1-deoxy-D-xylulose-5-phosphate synthase.